A 187-amino-acid chain; its full sequence is UPF0301 protein PC1_3712 (187 aa).

It belongs to the UPF0301 (AlgH) family.

This chain is UPF0301 protein PC1_3712, found in Pectobacterium carotovorum subsp. carotovorum (strain PC1).